The sequence spans 295 residues: Porphobilinogen deaminase (295 aa).

C241 bears the S-(dipyrrolylmethanemethyl)cysteine mark.

Belongs to the HMBS family. As to quaternary structure, monomer. The cofactor is dipyrromethane.

It catalyses the reaction 4 porphobilinogen + H2O = hydroxymethylbilane + 4 NH4(+). The protein operates within porphyrin-containing compound metabolism; protoporphyrin-IX biosynthesis; coproporphyrinogen-III from 5-aminolevulinate: step 2/4. In terms of biological role, tetrapolymerization of the monopyrrole PBG into the hydroxymethylbilane pre-uroporphyrinogen in several discrete steps. In Lachnospira eligens (strain ATCC 27750 / DSM 3376 / VPI C15-48 / C15-B4) (Eubacterium eligens), this protein is Porphobilinogen deaminase.